A 212-amino-acid polypeptide reads, in one-letter code: tRNA (guanine-N(7)-)-methyltransferase (212 aa).

4 residues coordinate S-adenosyl-L-methionine: Glu44, Asp69, Asp96, and Asp118. Asp118 is a catalytic residue. Substrate is bound at residue Lys122. The segment at 124–129 is interaction with RNA; the sequence is RHEKRR. Substrate contacts are provided by residues Asp154 and 191 to 194; that span reads TEYE.

This sequence belongs to the class I-like SAM-binding methyltransferase superfamily. TrmB family.

It catalyses the reaction guanosine(46) in tRNA + S-adenosyl-L-methionine = N(7)-methylguanosine(46) in tRNA + S-adenosyl-L-homocysteine. It participates in tRNA modification; N(7)-methylguanine-tRNA biosynthesis. Functionally, catalyzes the formation of N(7)-methylguanine at position 46 (m7G46) in tRNA. This Streptococcus gordonii (strain Challis / ATCC 35105 / BCRC 15272 / CH1 / DL1 / V288) protein is tRNA (guanine-N(7)-)-methyltransferase.